We begin with the raw amino-acid sequence, 169 residues long: Peptide methionine sulfoxide reductase MsrA (169 aa).

The active site involves Cys10.

This sequence belongs to the MsrA Met sulfoxide reductase family.

It catalyses the reaction L-methionyl-[protein] + [thioredoxin]-disulfide + H2O = L-methionyl-(S)-S-oxide-[protein] + [thioredoxin]-dithiol. The enzyme catalyses [thioredoxin]-disulfide + L-methionine + H2O = L-methionine (S)-S-oxide + [thioredoxin]-dithiol. Its function is as follows. Has an important function as a repair enzyme for proteins that have been inactivated by oxidation. Catalyzes the reversible oxidation-reduction of methionine sulfoxide in proteins to methionine. The sequence is that of Peptide methionine sulfoxide reductase MsrA from Streptococcus mutans serotype c (strain ATCC 700610 / UA159).